A 517-amino-acid polypeptide reads, in one-letter code: Maturase K (517 aa).

This sequence belongs to the intron maturase 2 family. MatK subfamily.

The protein resides in the plastid. The protein localises to the chloroplast. Functionally, usually encoded in the trnK tRNA gene intron. Probably assists in splicing its own and other chloroplast group II introns. This chain is Maturase K, found in Paris tetraphylla.